The chain runs to 341 residues: L-threonine 3-dehydrogenase (341 aa).

Cys-38 contributes to the Zn(2+) binding site. Catalysis depends on charge relay system residues Thr-40 and His-43. Residues His-63, Glu-64, Cys-93, Cys-96, Cys-99, and Cys-107 each contribute to the Zn(2+) site. NAD(+) contacts are provided by residues Ile-175, Asp-195, Arg-200, 262–264 (LGI), and 286–287 (IY).

This sequence belongs to the zinc-containing alcohol dehydrogenase family. As to quaternary structure, homotetramer. Zn(2+) serves as cofactor.

It is found in the cytoplasm. The enzyme catalyses L-threonine + NAD(+) = (2S)-2-amino-3-oxobutanoate + NADH + H(+). Its pathway is amino-acid degradation; L-threonine degradation via oxydo-reductase pathway; glycine from L-threonine: step 1/2. In terms of biological role, catalyzes the NAD(+)-dependent oxidation of L-threonine to 2-amino-3-ketobutyrate. The chain is L-threonine 3-dehydrogenase from Photorhabdus laumondii subsp. laumondii (strain DSM 15139 / CIP 105565 / TT01) (Photorhabdus luminescens subsp. laumondii).